Here is a 222-residue protein sequence, read N- to C-terminus: Octanoyltransferase (222 aa).

The 180-residue stretch at Gly35 to Asp214 folds into the BPL/LPL catalytic domain. Residues Arg73–His80, Ala145–Gly147, and Gly158–Ser160 contribute to the substrate site. Cys176 (acyl-thioester intermediate) is an active-site residue.

The protein belongs to the LipB family.

Its subcellular location is the cytoplasm. The catalysed reaction is octanoyl-[ACP] + L-lysyl-[protein] = N(6)-octanoyl-L-lysyl-[protein] + holo-[ACP] + H(+). The protein operates within protein modification; protein lipoylation via endogenous pathway; protein N(6)-(lipoyl)lysine from octanoyl-[acyl-carrier-protein]: step 1/2. Catalyzes the transfer of endogenously produced octanoic acid from octanoyl-acyl-carrier-protein onto the lipoyl domains of lipoate-dependent enzymes. Lipoyl-ACP can also act as a substrate although octanoyl-ACP is likely to be the physiological substrate. The chain is Octanoyltransferase from Novosphingobium aromaticivorans (strain ATCC 700278 / DSM 12444 / CCUG 56034 / CIP 105152 / NBRC 16084 / F199).